The primary structure comprises 99 residues: Aspartyl/glutamyl-tRNA(Asn/Gln) amidotransferase subunit C (99 aa).

This sequence belongs to the GatC family. In terms of assembly, heterotrimer of A, B and C subunits.

It carries out the reaction L-glutamyl-tRNA(Gln) + L-glutamine + ATP + H2O = L-glutaminyl-tRNA(Gln) + L-glutamate + ADP + phosphate + H(+). The enzyme catalyses L-aspartyl-tRNA(Asn) + L-glutamine + ATP + H2O = L-asparaginyl-tRNA(Asn) + L-glutamate + ADP + phosphate + 2 H(+). Functionally, allows the formation of correctly charged Asn-tRNA(Asn) or Gln-tRNA(Gln) through the transamidation of misacylated Asp-tRNA(Asn) or Glu-tRNA(Gln) in organisms which lack either or both of asparaginyl-tRNA or glutaminyl-tRNA synthetases. The reaction takes place in the presence of glutamine and ATP through an activated phospho-Asp-tRNA(Asn) or phospho-Glu-tRNA(Gln). This is Aspartyl/glutamyl-tRNA(Asn/Gln) amidotransferase subunit C from Burkholderia cenocepacia (strain ATCC BAA-245 / DSM 16553 / LMG 16656 / NCTC 13227 / J2315 / CF5610) (Burkholderia cepacia (strain J2315)).